A 565-amino-acid polypeptide reads, in one-letter code: Periplasmic trehalase (565 aa).

Positions 1-30 are cleaved as a signal peptide; sequence MKSPAPSRPQKMALIPACIFLCFAALSVQA. Residues Arg152, 159-160, Asn196, 205-207, 277-279, and Gly310 each bind substrate; these read WD, RSQ, and RPE. Active-site proton donor/acceptor residues include Asp312 and Glu496. Glu511 contributes to the substrate binding site. The interval 539–565 is disordered; it reads CDNVPATRPLSESTTQPLKQKEAEPTP.

This sequence belongs to the glycosyl hydrolase 37 family. As to quaternary structure, monomer.

It localises to the periplasm. The catalysed reaction is alpha,alpha-trehalose + H2O = alpha-D-glucose + beta-D-glucose. Provides the cells with the ability to utilize trehalose at high osmolarity by splitting it into glucose molecules that can subsequently be taken up by the phosphotransferase-mediated uptake system. The chain is Periplasmic trehalase from Escherichia coli O45:K1 (strain S88 / ExPEC).